The primary structure comprises 267 residues: MTKKIVLQIAYQGTSYSGWQYQPNALSIQEVLETILKKIAGFRISVISSGRTDAGVHAQGQIAHFHCPDHPHFTDPRQIQKMLNALLPHDIVIHDAVMTDGDFHSRFSAIAKEYRYTLSLLPKPLPHHRLFCFSPRYKLNIARMQEAAQYLVGTHDFASFANLGREYSSTIRTLYTLDLSEQEHLVTVICRGNGFLYKMVRNIVGALLDIGKGKYPPEHLLDMLATKDRRKGPPSAPPYGLSLHHVCYPPPYQWFCKHEHNNSSEGK.

The active-site Nucleophile is the D53. Y114 is a substrate binding site.

It belongs to the tRNA pseudouridine synthase TruA family. As to quaternary structure, homodimer.

It carries out the reaction uridine(38/39/40) in tRNA = pseudouridine(38/39/40) in tRNA. Functionally, formation of pseudouridine at positions 38, 39 and 40 in the anticodon stem and loop of transfer RNAs. The polypeptide is tRNA pseudouridine synthase A (Chlamydia trachomatis serovar A (strain ATCC VR-571B / DSM 19440 / HAR-13)).